Here is a 712-residue protein sequence, read N- to C-terminus: MSQEKQVFSIDLAGRQLTVETGQLAKQANGAVLVRYGDTAVLSTATASKEAKNVDFFPLTVNYEERLYAVGKIPGGFIKREGRPSEKAILASRLIDRPIRPLFADGFRNEVQVVSIVMSVDQDCSSEMAAMLGSSLALSISDIPFEGPIAGATVGRINGEFVINPTVEQQEQSDIHLVVAGTKDAINMVEAGADQVPEETMLEAIMFGHDEIKRLIAFQEEIVQAVGKEKSEVKLYEVDADLNQAVREMAEKDMHSAIQVHEKHAREDAINEVKKRVIEHYEAQEADADTLGQVNEILYKIVKEEVRRLITVEKIRPDGRKGDEIRPLASEVGILSRTHGSGLFTRGQTQALSICTLGALGDVQILDGLGVEESKRFMHHYNFPSFSVGETRPMRGPGRREIGHGALGERALEPVIPSEKDFPYTVRLVSEVLESNGSTSQASICGSTLAMMDAGVPLKAPVAGIAMGLVKTGEHYTILSDIQGMEDHLGDMDFKVAGTAHGVTALQMDIKIDGLSREILEEALQQAKVGRVHILNHMLSVIAEPRTELSAYAPKIITMTINPDKIRDVIGPSGKQINKIIEETGVKIDIEQDGTVFISSINQEMNDKAKKIIEDIVREVQVGEIYEGKVKRVEKFGAFVELFSDKDGLVHISELALERVGKVEDVVKIGDVITVKVIEIDKQGRVNLSRKVLLKEEQEKEAAKEENKQEQQ.

Mg(2+)-binding residues include aspartate 487 and aspartate 493. The KH domain maps to proline 554–isoleucine 613. The region spanning glycine 623 to lysine 691 is the S1 motif domain.

It belongs to the polyribonucleotide nucleotidyltransferase family. Requires Mg(2+) as cofactor.

It is found in the cytoplasm. It carries out the reaction RNA(n+1) + phosphate = RNA(n) + a ribonucleoside 5'-diphosphate. Involved in mRNA degradation. Catalyzes the phosphorolysis of single-stranded polyribonucleotides processively in the 3'- to 5'-direction. The sequence is that of Polyribonucleotide nucleotidyltransferase from Bacillus cereus (strain AH820).